Consider the following 88-residue polypeptide: Small ribosomal subunit protein bS20 (88 aa).

Positions 1 to 27 (MANTPQAKKRARQNEKARKHNASMRSM) are disordered. The span at 7 to 22 (AKKRARQNEKARKHNA) shows a compositional bias: basic residues.

This sequence belongs to the bacterial ribosomal protein bS20 family.

Its function is as follows. Binds directly to 16S ribosomal RNA. In Cellvibrio japonicus (strain Ueda107) (Pseudomonas fluorescens subsp. cellulosa), this protein is Small ribosomal subunit protein bS20.